We begin with the raw amino-acid sequence, 158 residues long: Cyclic pyranopterin monophosphate synthase (158 aa).

Residues 76–78 (LCH) and 114–115 (ME) each bind substrate. Aspartate 129 is a catalytic residue.

Belongs to the MoaC family. In terms of assembly, homohexamer; trimer of dimers.

It carries out the reaction (8S)-3',8-cyclo-7,8-dihydroguanosine 5'-triphosphate = cyclic pyranopterin phosphate + diphosphate. It functions in the pathway cofactor biosynthesis; molybdopterin biosynthesis. Catalyzes the conversion of (8S)-3',8-cyclo-7,8-dihydroguanosine 5'-triphosphate to cyclic pyranopterin monophosphate (cPMP). This Shewanella baltica (strain OS223) protein is Cyclic pyranopterin monophosphate synthase.